A 170-amino-acid polypeptide reads, in one-letter code: Opacity-related protein POPM3 (170 aa).

This sequence belongs to the opacity porin family.

It localises to the cell outer membrane. The polypeptide is Opacity-related protein POPM3 (opr) (Neisseria meningitidis serogroup C).